The sequence spans 514 residues: Inosine-5'-monophosphate dehydrogenase (514 aa).

CBS domains are found at residues 112–171 and 175–233; these read FISK…DTPV and MTRR…PHST. NAD(+) contacts are provided by residues 270-272 and 320-322; these read DSS and GMG. Gly-322 and Gly-324 together coordinate K(+). Position 325 (Ser-325) interacts with IMP. Cys-327 lines the K(+) pocket. Cys-327 (thioimidate intermediate) is an active-site residue. Residues 360–362, 383–384, and 407–411 contribute to the IMP site; these read DGG, GG, and YRGMG. The Proton acceptor role is filled by Arg-425. Gln-437 provides a ligand contact to IMP. 3 residues coordinate K(+): Glu-496, Gly-497, and Gly-498. Residues 512-514 carry the Microbody targeting signal motif; it reads AKM.

Belongs to the IMPDH/GMPR family. As to quaternary structure, heterotetramer. Interacts with glycosomal protein sorting receptor PEX5. K(+) is required as a cofactor.

The protein localises to the glycosome. The enzyme catalyses IMP + NAD(+) + H2O = XMP + NADH + H(+). It participates in purine metabolism; XMP biosynthesis via de novo pathway; XMP from IMP: step 1/1. Mycophenolic acid (MPA) is a non-competitive inhibitor that prevents formation of the closed enzyme conformation by binding to the same site as the amobile flap. In contrast, mizoribine monophosphate (MZP) is a competitive inhibitor that induces the closed conformation. MPA is a potent inhibitor of mammalian IMPDHs but a poor inhibitor of the bacterial enzymes. MZP is a more potent inhibitor of bacterial IMPDH. Potently inhibited by MPA. Inhibited by XMP and GMP. In terms of biological role, catalyzes the conversion of inosine 5'-phosphate (IMP) to xanthosine 5'-phosphate (XMP), the first committed and rate-limiting step in the de novo synthesis of guanine nucleotides, and therefore plays an important role in the regulation of cell growth. In Leishmania donovani, this protein is Inosine-5'-monophosphate dehydrogenase.